The sequence spans 74 residues: Putative defensin-like protein 36 (74 aa).

The N-terminal stretch at 1 to 22 is a signal peptide; the sequence is MASNKVSFFLVLCLCILLAGEC. Disulfide bonds link Cys-33/Cys-59, Cys-45/Cys-69, and Cys-49/Cys-71.

The protein belongs to the DEFL family.

It is found in the secreted. The protein is Putative defensin-like protein 36 of Arabidopsis thaliana (Mouse-ear cress).